Here is a 454-residue protein sequence, read N- to C-terminus: tRNA modification GTPase MnmE (454 aa).

The (6S)-5-formyl-5,6,7,8-tetrahydrofolate site is built by R23, E80, and K120. In terms of domain architecture, TrmE-type G spans 216–377 (GMKVVIAGRP…LRNHLKQSMG (162 aa)). N226 is a K(+) binding site. Residues 226–231 (NAGKSS), 245–251 (TDIAGTT), 270–273 (DTAG), 335–338 (NKAD), and 358–360 (SAR) contribute to the GTP site. S230 is a binding site for Mg(2+). K(+)-binding residues include T245, I247, and T250. T251 provides a ligand contact to Mg(2+). K454 provides a ligand contact to (6S)-5-formyl-5,6,7,8-tetrahydrofolate.

Belongs to the TRAFAC class TrmE-Era-EngA-EngB-Septin-like GTPase superfamily. TrmE GTPase family. In terms of assembly, homodimer. Heterotetramer of two MnmE and two MnmG subunits. K(+) is required as a cofactor.

The protein localises to the cytoplasm. Its function is as follows. Exhibits a very high intrinsic GTPase hydrolysis rate. Involved in the addition of a carboxymethylaminomethyl (cmnm) group at the wobble position (U34) of certain tRNAs, forming tRNA-cmnm(5)s(2)U34. The chain is tRNA modification GTPase MnmE from Salmonella paratyphi C (strain RKS4594).